Here is a 112-residue protein sequence, read N- to C-terminus: DNA-binding protein TGAM_1196 (112 aa).

This sequence belongs to the PDCD5 family.

In Thermococcus gammatolerans (strain DSM 15229 / JCM 11827 / EJ3), this protein is DNA-binding protein TGAM_1196.